A 37-amino-acid polypeptide reads, in one-letter code: Large ribosomal subunit protein bL36 (37 aa).

The protein belongs to the bacterial ribosomal protein bL36 family.

The sequence is that of Large ribosomal subunit protein bL36 from Micrococcus luteus (strain ATCC 4698 / DSM 20030 / JCM 1464 / CCM 169 / CCUG 5858 / IAM 1056 / NBRC 3333 / NCIMB 9278 / NCTC 2665 / VKM Ac-2230) (Micrococcus lysodeikticus).